A 277-amino-acid chain; its full sequence is Putative phosphoenolpyruvate synthase regulatory protein (277 aa).

Residue 152 to 159 (GVSRCGKT) coordinates ADP.

It belongs to the pyruvate, phosphate/water dikinase regulatory protein family. PSRP subfamily.

The catalysed reaction is [pyruvate, water dikinase] + ADP = [pyruvate, water dikinase]-phosphate + AMP + H(+). The enzyme catalyses [pyruvate, water dikinase]-phosphate + phosphate + H(+) = [pyruvate, water dikinase] + diphosphate. Functionally, bifunctional serine/threonine kinase and phosphorylase involved in the regulation of the phosphoenolpyruvate synthase (PEPS) by catalyzing its phosphorylation/dephosphorylation. The polypeptide is Putative phosphoenolpyruvate synthase regulatory protein (Chromohalobacter salexigens (strain ATCC BAA-138 / DSM 3043 / CIP 106854 / NCIMB 13768 / 1H11)).